We begin with the raw amino-acid sequence, 142 residues long: Transcription antitermination protein NusB (142 aa).

Belongs to the NusB family.

In terms of biological role, involved in transcription antitermination. Required for transcription of ribosomal RNA (rRNA) genes. Binds specifically to the boxA antiterminator sequence of the ribosomal RNA (rrn) operons. In Roseiflexus sp. (strain RS-1), this protein is Transcription antitermination protein NusB.